A 581-amino-acid polypeptide reads, in one-letter code: Protein alan shepard (581 aa).

The span at 1–10 shows a compositional bias: pro residues; sequence MHPRYSPAPP. A disordered region spans residues 1–73; sequence MHPRYSPAPP…AVTAAPPTPR (73 aa). At tyrosine 5 the chain carries Phosphotyrosine. Positions 35 to 54 are enriched in polar residues; sequence ANNSQQLPPQMPRSQNYANG. The segment covering 55 to 68 has biased composition (low complexity); the sequence is SSSSAAAASAVTAA. Residues tyrosine 128 and tyrosine 146 each carry the phosphotyrosine modification. A compositionally biased stretch (low complexity) spans 168 to 226; the sequence is PATTTYGQRVPTAASPSNTNSSSSSNTGSQSGTLSTSLSHTTNTNTNMGPNGTAQNQNQ. The tract at residues 168-234 is disordered; sequence PATTTYGQRV…NQQGGGGEQL (67 aa). RRM domains follow at residues 237-310 and 316-395; these read TNLY…MAKQ and TNLY…FADG. The segment at 555–581 is disordered; the sequence is MTDSEQASTAASPDEAYTQYPHQAAPK.

Has a role in the perception of gravity. The sequence is that of Protein alan shepard from Drosophila willistoni (Fruit fly).